Reading from the N-terminus, the 449-residue chain is Trigger factor (449 aa).

One can recognise a PPIase FKBP-type domain in the interval Gly-172–Pro-257.

This sequence belongs to the FKBP-type PPIase family. Tig subfamily.

Its subcellular location is the cytoplasm. It catalyses the reaction [protein]-peptidylproline (omega=180) = [protein]-peptidylproline (omega=0). Its function is as follows. Involved in protein export. Acts as a chaperone by maintaining the newly synthesized protein in an open conformation. Functions as a peptidyl-prolyl cis-trans isomerase. The protein is Trigger factor of Ralstonia nicotianae (strain ATCC BAA-1114 / GMI1000) (Ralstonia solanacearum).